The following is a 44-amino-acid chain: Diuretic hormone (44 aa).

V44 is modified (valine amide).

It localises to the secreted. Its function is as follows. Regulation of fluid secretion. Stimulates primary urine secretion by Malpighian tubules and causes a dose-dependent stimulation of cAMP levels in the tubules. May act as clearance peptide in that it may remove metabolic waste from the hemolymph. This Stomoxys calcitrans (Stable fly) protein is Diuretic hormone.